Consider the following 324-residue polypeptide: Beta-ketoacyl-[acyl-carrier-protein] synthase III (324 aa).

Residues cysteine 114 and histidine 251 contribute to the active site. The interval 252 to 256 is ACP-binding; that stretch reads QANRR. Asparagine 281 is a catalytic residue.

It belongs to the thiolase-like superfamily. FabH family. As to quaternary structure, homodimer.

Its subcellular location is the cytoplasm. It carries out the reaction malonyl-[ACP] + acetyl-CoA + H(+) = 3-oxobutanoyl-[ACP] + CO2 + CoA. The protein operates within lipid metabolism; fatty acid biosynthesis. Catalyzes the condensation reaction of fatty acid synthesis by the addition to an acyl acceptor of two carbons from malonyl-ACP. Catalyzes the first condensation reaction which initiates fatty acid synthesis and may therefore play a role in governing the total rate of fatty acid production. Possesses both acetoacetyl-ACP synthase and acetyl transacylase activities. Its substrate specificity determines the biosynthesis of branched-chain and/or straight-chain of fatty acids. In Paramagnetospirillum magneticum (strain ATCC 700264 / AMB-1) (Magnetospirillum magneticum), this protein is Beta-ketoacyl-[acyl-carrier-protein] synthase III.